Consider the following 174-residue polypeptide: Gamma-crystallin D (174 aa).

2 consecutive Beta/gamma crystallin 'Greek key' domains span residues 2-40 (GKIT…RVDS) and 41-83 (GCWM…RLIP). The segment at 84–87 (HAGS) is connecting peptide. 2 Beta/gamma crystallin 'Greek key' domains span residues 88 to 128 (HRIR…NVLE) and 129 to 171 (GCWV…RRVM).

This sequence belongs to the beta/gamma-crystallin family. As to expression, detected in the superior olivary complex of the auditory hindbrain.

In terms of biological role, crystallins are the dominant structural components of the vertebrate eye lens. This is Gamma-crystallin D (Crygd) from Mus musculus (Mouse).